The primary structure comprises 418 residues: FXa-directed anticoagulant (418 aa).

Positions 1-19 (MNLKIAIIVICQLVYFTQG) are cleaved as a signal peptide. 3 N-linked (GlcNAc...) asparagine glycosylation sites follow: N117, N167, and N286.

The protein belongs to the serpin family. Interacts with host coagulation factor X/F10 (activated). In terms of tissue distribution, female salivary gland (at protein level).

The protein localises to the secreted. Functionally, anticoagulant and antithrombotic serpin-type protein inhibiting host coagulation factor Xa (F10). Does not inhibit host uPA/urokinase-type plasminogen activator (PLAU), kallikrein, granzyme B (GZMB), matriptase, elastase, alpha-chymotrypsin, chymase, coagulation factor XIIa (F12), coagulation factor XIa (F11), plasmin (PLG), thrombin (F2), trypsin and cathepsin G (CTSG). Inhibits factor Xa-induced production of pro-inflammatory cytokines, such as MCP-1/CCL2, TNF-alpha/TNF, IL-1beta/IL1B, IL6, IL8/CXCL8 and IL18, in human endothelial cells. Inhibits factor Xa-induced up-regulation of protease-activated receptors (PARs) F2R, F2RL1 and F2RL2 in human endothelial cells. Prevents activation of host F2RL1 via inhibition of F2RL1 cleavage by host factor Xa. Inhibits factor Xa-induced up-regulation of adhesion molecules ICAM1 and VCAM1 in human endothelial cells. Inhibits factor Xa-induced up-regulation of phosphorylated ERK1/2 in human endothelial cells. Inhibits factor Xa-induced activation of transcription factor NF-kappa-B in human endothelial cells. Reduces factor Xa-induced edema in the host. Reduces factor Xa-induced endothelial permeability in the host. The polypeptide is FXa-directed anticoagulant (Aedes albopictus (Asian tiger mosquito)).